We begin with the raw amino-acid sequence, 588 residues long: MIQHPRIGIRPTIDGRRQGVRESLEVQTMNMAKSVADLISSTLKYPDGEPVECVISPSTIGRVPEAAASHELFKKSNVCATITVTPCWCYGSETMDMSPDIPHAIWGFNGTERPGAVYLAAVLASHAQKGIPAFGIYGRDVQEANDTDIPEDVKEKLLRYARAALATGLMRDTAYLSMGSVSMGIGGSIVNPDFFQEYLGMRNESVDMTEFTRRMDRGIYDPEEFERAMVWVKEHIKEGVDRNREDLILSKEEKEKQWEFVIKMFMIGRDLMVGNPRLAELGFEEEAVGHHALVAGFQGQRQWTDHFPNGDFMETFLNTQFDWNGIRKPFVFATENDSLNGVSMLFNYLLTNTPQIFADVRTYWSPEAVKRVTGHTLEGRAAAGFLHLINSGSCTLDGTGQATRDGKPVMKPFWELEESEVQAMLENTDFPPANREYFRGGGFSTRFLTKGDMPVTMVRLNLLKGVGPVLQIAEGYTLELPEDVHHTLDNRTDPGWPTTWFAPRLTGKGAFKSVYDVMNNWGANHGAITYGHIGADLITLASMLRIPVNMHNVPEEDIFRPKNWSLFGTEDLESADYRACQLLGPLHK.

Catalysis depends on proton acceptor residues glutamate 335 and aspartate 359. Glutamate 335, aspartate 359, and histidine 525 together coordinate Mn(2+).

The protein belongs to the L-fucose isomerase family. The cofactor is Mn(2+).

Its subcellular location is the cytoplasm. The catalysed reaction is L-fucose = L-fuculose. It functions in the pathway carbohydrate degradation; L-fucose degradation; L-lactaldehyde and glycerone phosphate from L-fucose: step 1/3. Its function is as follows. Converts the aldose L-fucose into the corresponding ketose L-fuculose. The sequence is that of L-fucose isomerase from Streptococcus pneumoniae (strain 70585).